The sequence spans 209 residues: SAGA-associated factor 11 homolog 1 (209 aa).

Positions 1 to 36 (MSRTIVVKNPRTSGKDEDKAQIPSQDELPSGSSGAK) are disordered. Residues 120 to 141 (CCCPNCERMVAAVRFAPHLQTC) form an SGF11-type zinc finger. Low complexity predominate over residues 156-166 (LTVSSRSSSTS). The segment at 156–209 (LTVSSRSSSTSTGGGQANEKSTDDEDWSLDSRPGKSTKNSRNKGSKKNQKNKLK) is disordered. A compositionally biased stretch (basic residues) spans 193-209 (KNSRNKGSKKNQKNKLK).

This sequence belongs to the SGF11 family. In terms of assembly, component of some SAGA transcription coactivator-HAT complexes, at least composed of Ada2b, not/nonstop, Pcaf/Gcn5, Sgf11 and Spt3. Within the SAGA complex, Sgf11, e(y)2, and not/nonstop form an additional subcomplex of SAGA called the DUB module (deubiquitination module). Interacts directly with not/nonstop. Interacts with the AMEX complex component xmas-2. Interacts with Cbp80; important for promoter recruitment of Sgf11 that is not associated with the DUB module.

It localises to the nucleus. It is found in the nucleoplasm. The protein localises to the cytoplasm. Its function is as follows. Component of the transcription regulatory histone acetylation (HAT) complex SAGA, a multiprotein complex that activates transcription by remodeling chromatin and mediating histone acetylation and deubiquitination. Within the SAGA complex, participates in a subcomplex that specifically deubiquitinates histone H2B. The SAGA complex is recruited to specific gene promoters by activators, where it is required for transcription. Required for nuclear receptor-mediated transactivation. Binds independently on SAGA to promoters in an RNA-dependent manner. Binds to mRNA and is essential for total mRNA export from the nucleus. Required to counteract heterochromatin silencing. Controls the development of neuronal connectivity in visual system by being required for accurate axon targeting in the optic lobe. Required for expression of ecdysone-induced genes such as br/broad. In Drosophila willistoni (Fruit fly), this protein is SAGA-associated factor 11 homolog 1.